Here is a 1331-residue protein sequence, read N- to C-terminus: ABC multidrug transporter MDR2 (1331 aa).

Composition is skewed to basic and acidic residues over residues 1-20 and 31-41; these read MVEV…KQEN and SDKEKVAKKGN. Residues 1–51 are disordered; it reads MVEVSEKPNTQDDGVSKQENRNPASSSSSTSDKEKVAKKGNSDATKSSTPE. 4 helical membrane-spanning segments follow: residues 93-113, 147-167, 219-239, and 242-262; these read MIFL…LPLF, YFVY…VGFI, KVGL…IGYV, and WKLA…MGGI. The region spanning 97–387 is the ABC transmembrane type-1 1 domain; sequence AIVSLASIAA…VAPNTQAFAS (291 aa). Residue Asn293 is glycosylated (N-linked (GlcNAc...) asparagine). 2 helical membrane-spanning segments follow: residues 325 to 345 and 358 to 378; these read LGIM…LGFW and LSAI…IGNV. Residues 422 to 667 form the ABC transporter 1 domain; it reads IEFRGIKHIY…KGTYLQLVEA (246 aa). An ATP-binding site is contributed by 457–464; sequence GPSGSGKS. Residue Asn529 is glycosylated (N-linked (GlcNAc...) asparagine). The next 2 membrane-spanning stretches (helical) occupy residues 762-782 and 810-830; these read LCGF…SVFF and FLML…IFAI. In terms of domain architecture, ABC transmembrane type-1 2 spans 764 to 1051; the sequence is GFFFAVLSGA…VFSFSPDMGK (288 aa). Asn860 carries an N-linked (GlcNAc...) asparagine glycan. 4 consecutive transmembrane segments (helical) span residues 884 to 904, 910 to 930, 995 to 1015, and 1025 to 1045; these read LGTI…ALAF, LVCI…FWIL, ASQS…GGLL, and FFLC…VFSF. The ABC transporter 2 domain maps to 1086-1324; sequence IEFRDVHFRY…KGRYYELVHM (239 aa). Asn1108 is a glycosylation site (N-linked (GlcNAc...) asparagine). Position 1121-1128 (1121-1128) interacts with ATP; that stretch reads GPSGCGKS.

Belongs to the ABC transporter superfamily. ABCB family. Multidrug resistance exporter (TC 3.A.1.201) subfamily.

The protein localises to the cell membrane. It catalyses the reaction itraconazole(in) + ATP + H2O = itraconazole(out) + ADP + phosphate + H(+). Pleiotropic ABC efflux transporter that may be involved in the modulation susceptibility to a wide range of unrelated cytotoxic compounds, including terbinafine, 4-nitroquinoline N-oxide, and ethidium bromide. May play a role in pathogenicity. The sequence is that of ABC multidrug transporter MDR2 from Trichophyton interdigitale (strain MR816).